A 210-amino-acid chain; its full sequence is Urease accessory protein UreE (210 aa).

The segment at 136-210 (PEGGAYAEPS…HGHSHAHDHK (75 aa)) is disordered. Composition is skewed to basic and acidic residues over residues 145–169 (SHAH…TSHD) and 178–196 (HDHD…EHCG). The segment covering 197–210 (HDHHHGHSHAHDHK) has biased composition (basic residues).

This sequence belongs to the UreE family.

The protein resides in the cytoplasm. In terms of biological role, involved in urease metallocenter assembly. Binds nickel. Probably functions as a nickel donor during metallocenter assembly. This chain is Urease accessory protein UreE, found in Bradyrhizobium sp. (strain ORS 278).